A 72-amino-acid chain; its full sequence is Hypertrehalosaemic prohormone (72 aa).

Positions 1-21 (MNHLVKVLIVVVAIALVLCEA) are cleaved as a signal peptide. Gln22 carries the post-translational modification Pyrrolidone carboxylic acid. Thr31 bears the Threonine amide mark.

The protein belongs to the AKH/HRTH/RPCH family. Expressed in corpora cardiaca.

The protein resides in the secreted. Hypertrehalosaemic factors are neuropeptides that elevate the level of trehalose in the hemolymph (trehalose is the major carbohydrate in the hemolymph of insects). This Blaberus discoidalis (Tropical cockroach) protein is Hypertrehalosaemic prohormone.